We begin with the raw amino-acid sequence, 61 residues long: Alpha-conotoxine-like Am1.4 (61 aa).

The N-terminal stretch at 1 to 21 (MGMRMMFTVFLLVVLATTVVS) is a signal peptide. The propeptide occupies 22-44 (FMSGRASHGRNAAASDLIALTIK).

It belongs to the conotoxin A superfamily. Is not hydroxylated. Post-translationally, contains 2 disulfide bonds. In terms of tissue distribution, expressed by the venom duct.

It localises to the secreted. Alpha-conotoxins act on postsynaptic membranes, they bind to the nicotinic acetylcholine receptors (nAChR) and thus inhibit them. The sequence is that of Alpha-conotoxine-like Am1.4 from Conus amadis (Amadis cone).